The chain runs to 323 residues: ComG operon protein 2 (323 aa).

Helical transmembrane passes span 93 to 113 (YPLF…SIII), 143 to 163 (LVII…WLVF), and 296 to 316 (MIYG…LVPM).

This sequence belongs to the GSP F family.

It is found in the cell membrane. In terms of biological role, required for transformation and DNA binding. In Bacillus subtilis (strain 168), this protein is ComG operon protein 2 (comGB).